Reading from the N-terminus, the 704-residue chain is DNA ligase (704 aa).

NAD(+) is bound by residues 58–62 (DYEYD), 107–108 (SL), and E138. K140 (N6-AMP-lysine intermediate) is an active-site residue. NAD(+) contacts are provided by R161, E199, K323, and K347. Residues C441, C444, C459, and C464 each coordinate Zn(2+). One can recognise a BRCT domain in the interval 621–704 (EKKGKLAGLN…LKLIGGENTE (84 aa)).

The protein belongs to the NAD-dependent DNA ligase family. LigA subfamily. Mg(2+) serves as cofactor. The cofactor is Mn(2+).

The catalysed reaction is NAD(+) + (deoxyribonucleotide)n-3'-hydroxyl + 5'-phospho-(deoxyribonucleotide)m = (deoxyribonucleotide)n+m + AMP + beta-nicotinamide D-nucleotide.. Functionally, DNA ligase that catalyzes the formation of phosphodiester linkages between 5'-phosphoryl and 3'-hydroxyl groups in double-stranded DNA using NAD as a coenzyme and as the energy source for the reaction. It is essential for DNA replication and repair of damaged DNA. In Sulfurihydrogenibium sp. (strain YO3AOP1), this protein is DNA ligase.